We begin with the raw amino-acid sequence, 122 residues long: Serum amyloid A-3 protein (122 aa).

Residues 1–18 form the signal peptide; sequence MKPFLAIIFCFLILGVDS. Positions 100 to 122 are disordered; that stretch reads ANKWGRSGKDPNHFRPAGLPSKY.

Belongs to the SAA family. As to expression, expressed by the liver; secreted in plasma.

It is found in the secreted. In terms of biological role, major acute phase reactant. Apolipoprotein of the HDL complex. In vitro exhibits antimicrobial activity against Escherichia coli, Streptococcus uberis and Pseudomonas aeruginosa. The protein is Serum amyloid A-3 protein (SAA3) of Mesocricetus auratus (Golden hamster).